The chain runs to 89 residues: Small ribosomal subunit protein uS15 (89 aa).

The protein belongs to the universal ribosomal protein uS15 family. In terms of assembly, part of the 30S ribosomal subunit. Forms a bridge to the 50S subunit in the 70S ribosome, contacting the 23S rRNA.

Functionally, one of the primary rRNA binding proteins, it binds directly to 16S rRNA where it helps nucleate assembly of the platform of the 30S subunit by binding and bridging several RNA helices of the 16S rRNA. Forms an intersubunit bridge (bridge B4) with the 23S rRNA of the 50S subunit in the ribosome. This is Small ribosomal subunit protein uS15 from Chromohalobacter salexigens (strain ATCC BAA-138 / DSM 3043 / CIP 106854 / NCIMB 13768 / 1H11).